The sequence spans 171 residues: MTKWFNVGKIVNTHGVRGEIRVISRTDFPEERYKVGNTLYISNEKDTDYLPVKVTSHRQHKTFDLLTFEGYNNVDEVEKFKGSLIKVPEEQLGELAEGEYYYHEIIGCSVVTEEGEALGTIKEILSPGANDVWVIKRPKGQDLLIPYIDDVVLQVNIENKLVTIHVMEGLL.

The region spanning 96–170 (AEGEYYYHEI…LVTIHVMEGL (75 aa)) is the PRC barrel domain.

This sequence belongs to the RimM family. In terms of assembly, binds ribosomal protein uS19.

The protein resides in the cytoplasm. An accessory protein needed during the final step in the assembly of 30S ribosomal subunit, possibly for assembly of the head region. Essential for efficient processing of 16S rRNA. May be needed both before and after RbfA during the maturation of 16S rRNA. It has affinity for free ribosomal 30S subunits but not for 70S ribosomes. The polypeptide is Ribosome maturation factor RimM (Bacillus cereus (strain G9842)).